The chain runs to 81 residues: Sulfur carrier protein TusA (81 aa).

Catalysis depends on Cys-19, which acts as the Cysteine persulfide intermediate.

This sequence belongs to the sulfur carrier protein TusA family.

The protein localises to the cytoplasm. Its function is as follows. Sulfur carrier protein which probably makes part of a sulfur-relay system. The protein is Sulfur carrier protein TusA of Shewanella frigidimarina (strain NCIMB 400).